The primary structure comprises 203 residues: Ribosomal RNA large subunit methyltransferase E (203 aa).

S-adenosyl-L-methionine contacts are provided by Gly51, Trp53, Asp69, Asp85, and Asp108. The Proton acceptor role is filled by Lys148.

The protein belongs to the class I-like SAM-binding methyltransferase superfamily. RNA methyltransferase RlmE family.

Its subcellular location is the cytoplasm. It catalyses the reaction uridine(2552) in 23S rRNA + S-adenosyl-L-methionine = 2'-O-methyluridine(2552) in 23S rRNA + S-adenosyl-L-homocysteine + H(+). Specifically methylates the uridine in position 2552 of 23S rRNA at the 2'-O position of the ribose in the fully assembled 50S ribosomal subunit. This is Ribosomal RNA large subunit methyltransferase E from Methanosphaerula palustris (strain ATCC BAA-1556 / DSM 19958 / E1-9c).